The primary structure comprises 513 residues: NAD(P)H-quinone oxidoreductase subunit 2 (513 aa).

14 helical membrane-spanning segments follow: residues 15-35, 43-63, 80-100, 110-130, 133-153, 168-188, 211-231, 245-265, 281-301, 307-327, 335-355, 379-399, 401-421, and 467-487; these read VIWP…GDLI, WLPY…YFTW, LSIV…LMSI, LAEF…LSGA, LVMI…MTGY, LLIG…LYGL, LALA…ISAV, PTPV…ALAI, FIFI…ALAQ, MLAY…TAGT, IFYL…VILF, LCLS…GFFG, IYLF…VGLV, and VGIV…NPLF.

Belongs to the complex I subunit 2 family. In terms of assembly, NDH-1 can be composed of about 15 different subunits; different subcomplexes with different compositions have been identified which probably have different functions.

Its subcellular location is the cellular thylakoid membrane. The catalysed reaction is a plastoquinone + NADH + (n+1) H(+)(in) = a plastoquinol + NAD(+) + n H(+)(out). It carries out the reaction a plastoquinone + NADPH + (n+1) H(+)(in) = a plastoquinol + NADP(+) + n H(+)(out). NDH-1 shuttles electrons from an unknown electron donor, via FMN and iron-sulfur (Fe-S) centers, to quinones in the respiratory and/or the photosynthetic chain. The immediate electron acceptor for the enzyme in this species is believed to be plastoquinone. Couples the redox reaction to proton translocation, and thus conserves the redox energy in a proton gradient. Cyanobacterial NDH-1 also plays a role in inorganic carbon-concentration. The protein is NAD(P)H-quinone oxidoreductase subunit 2 of Microcystis aeruginosa (strain NIES-843 / IAM M-2473).